The following is a 72-amino-acid chain: Aurein-2.3 (72 aa).

The signal sequence occupies residues 1 to 22 (MAFLKKSLFLVLFLGLVSLSIC). The propeptide occupies 23–49 (EKEKRQNGEDEDENEAANHEEGSEEKR). The tract at residues 27-47 (RQNGEDEDENEAANHEEGSEE) is disordered. The segment covering 38–47 (AANHEEGSEE) has biased composition (basic and acidic residues). A Leucine amide modification is found at Leu65. A propeptide spanning residues 69-72 (NDVE) is cleaved from the precursor.

Post-translationally, amidation is essential for antibacterial activity against Gram-positive bacteria. As to expression, expressed by the skin dorsal glands.

The protein resides in the secreted. It is found in the target cell membrane. In terms of biological role, amphipathic alpha-helical antimicrobial peptide with weak to moderate activity against Gram-positive bacteria, and no activity against Gram-negative bacteria. Probably acts by disturbing membrane functions with its amphipathic structure. Strongly inhibits the formation of NO by neuronal nitric oxide synthase (nNOS) at micromolar concentrations. Acts by a non-competitive mechanism, probably by binding to calcium/calmodulin and as a consequence blocking calmodulin attachment to nNOS. This is Aurein-2.3 from Ranoidea aurea (Green and golden bell frog).